Here is a 132-residue protein sequence, read N- to C-terminus: Large ribosomal subunit protein uL14 (132 aa).

It belongs to the universal ribosomal protein uL14 family. In terms of assembly, part of the 50S ribosomal subunit. Forms a cluster with proteins L3 and L24e, part of which may contact the 16S rRNA in 2 intersubunit bridges.

Binds to 23S rRNA. Forms part of two intersubunit bridges in the 70S ribosome. This is Large ribosomal subunit protein uL14 from Methanosphaera stadtmanae (strain ATCC 43021 / DSM 3091 / JCM 11832 / MCB-3).